The sequence spans 245 residues: Adenosylcobinamide-GDP ribazoletransferase (245 aa).

The next 5 helical transmembrane spans lie at 31–51 (LLHY…AALL), 57–77 (PLLQ…ALHL), 109–129 (VAVV…LVVL), 134–154 (PAAL…LFLC), and 176–196 (ALMV…TGLL).

Belongs to the CobS family. Mg(2+) is required as a cofactor.

Its subcellular location is the cell inner membrane. It catalyses the reaction alpha-ribazole + adenosylcob(III)inamide-GDP = adenosylcob(III)alamin + GMP + H(+). The enzyme catalyses alpha-ribazole 5'-phosphate + adenosylcob(III)inamide-GDP = adenosylcob(III)alamin 5'-phosphate + GMP + H(+). It participates in cofactor biosynthesis; adenosylcobalamin biosynthesis; adenosylcobalamin from cob(II)yrinate a,c-diamide: step 7/7. Joins adenosylcobinamide-GDP and alpha-ribazole to generate adenosylcobalamin (Ado-cobalamin). Also synthesizes adenosylcobalamin 5'-phosphate from adenosylcobinamide-GDP and alpha-ribazole 5'-phosphate. The sequence is that of Adenosylcobinamide-GDP ribazoletransferase from Stutzerimonas stutzeri (strain A1501) (Pseudomonas stutzeri).